Here is a 962-residue protein sequence, read N- to C-terminus: Protease 3 (962 aa).

The first 23 residues, 1–23 (MPRSTWFKALLLLVALWAPLSQA), serve as a signal peptide directing secretion. His-88 provides a ligand contact to Zn(2+). Glu-91 functions as the Proton acceptor in the catalytic mechanism. His-92 and Glu-169 together coordinate Zn(2+).

This sequence belongs to the peptidase M16 family. As to quaternary structure, monomer. The cofactor is Zn(2+).

Its subcellular location is the periplasm. The catalysed reaction is Preferential cleavage of 16-Tyr-|-Leu-17 and 25-Phe-|-Tyr-26 bonds of oxidized insulin B chain. Also acts on other substrates of Mw less than 7 kDa such as insulin and glucagon.. In terms of biological role, endopeptidase that degrades small peptides of less than 7 kDa, such as glucagon and insulin. This is Protease 3 (ptrA) from Escherichia coli O157:H7.